We begin with the raw amino-acid sequence, 67 residues long: Type 3 secretion system chaperone PscE (67 aa).

Residues 16–37 (HAAALRQRLQAALAECRRELAR) adopt a coiled-coil conformation.

This sequence belongs to the YscE family. Forms a stable ternary complex with PscF/SctF and PscG within the cytoplasm. Co-stabilized by PscG.

It localises to the cytoplasm. Its function is as follows. Chaperone of the type III secretion system (T3SS), also called injectisome, which is used to inject bacterial effector proteins into eukaryotic host cells, facilitating the establishment and dissemination of infection. Along with PscG, prevents premature polymerization of the PscF/SctF needle protein within the cytoplasm. Required for type III secretion needle assembly. Also required for cytotoxicity by influencing PscF/SctF levels. The sequence is that of Type 3 secretion system chaperone PscE (pscE) from Pseudomonas aeruginosa (strain ATCC 15692 / DSM 22644 / CIP 104116 / JCM 14847 / LMG 12228 / 1C / PRS 101 / PAO1).